A 49-amino-acid polypeptide reads, in one-letter code: Peridinin-chlorophyll a-binding protein (49 aa).

In terms of assembly, monomer. Binds 12 peridinin and 2 chlorophyll a molecules per monomer.

It localises to the plastid. The protein localises to the chloroplast. Its function is as follows. Water-soluble antenna for capture of solar energy in the blue-green range. Peridinin is an asymmetric carotenoid. This chain is Peridinin-chlorophyll a-binding protein, found in Alexandrium cohorticula (Dinoflagellate).